We begin with the raw amino-acid sequence, 335 residues long: Adenosine deaminase (335 aa).

Positions 12 and 14 each coordinate Zn(2+). Residues H14 and D16 each contribute to the substrate site. H197 is a Zn(2+) binding site. The active-site Proton donor is the E200. A Zn(2+)-binding site is contributed by D278.

Belongs to the metallo-dependent hydrolases superfamily. Adenosine and AMP deaminases family. Adenosine deaminase subfamily. It depends on Zn(2+) as a cofactor.

The enzyme catalyses adenosine + H2O + H(+) = inosine + NH4(+). The catalysed reaction is 2'-deoxyadenosine + H2O + H(+) = 2'-deoxyinosine + NH4(+). Functionally, catalyzes the hydrolytic deamination of adenosine and 2-deoxyadenosine. The sequence is that of Adenosine deaminase from Clostridium botulinum (strain Okra / Type B1).